An 859-amino-acid polypeptide reads, in one-letter code: Leucine--tRNA ligase (859 aa).

Positions 42–52 match the 'HIGH' region motif; it reads PYPSGRLHMGH. The 'KMSKS' region motif lies at 618 to 622; sequence KMSKS. Lysine 621 contributes to the ATP binding site.

Belongs to the class-I aminoacyl-tRNA synthetase family.

It localises to the cytoplasm. The catalysed reaction is tRNA(Leu) + L-leucine + ATP = L-leucyl-tRNA(Leu) + AMP + diphosphate. This Shewanella putrefaciens (strain CN-32 / ATCC BAA-453) protein is Leucine--tRNA ligase.